Here is a 347-residue protein sequence, read N- to C-terminus: Anthranilate phosphoribosyltransferase (347 aa).

Residues glycine 88, 91-92 (GD), threonine 96, 98-101 (NIST), 116-124 (KHGNRAASS), and serine 128 each bind 5-phospho-alpha-D-ribose 1-diphosphate. Anthranilate is bound at residue glycine 88. Serine 100 lines the Mg(2+) pocket. Anthranilate is bound at residue asparagine 119. Arginine 174 lines the anthranilate pocket. Mg(2+) contacts are provided by aspartate 233 and glutamate 234.

The protein belongs to the anthranilate phosphoribosyltransferase family. Homodimer. Mg(2+) is required as a cofactor.

The catalysed reaction is N-(5-phospho-beta-D-ribosyl)anthranilate + diphosphate = 5-phospho-alpha-D-ribose 1-diphosphate + anthranilate. The protein operates within amino-acid biosynthesis; L-tryptophan biosynthesis; L-tryptophan from chorismate: step 2/5. Catalyzes the transfer of the phosphoribosyl group of 5-phosphorylribose-1-pyrophosphate (PRPP) to anthranilate to yield N-(5'-phosphoribosyl)-anthranilate (PRA). The protein is Anthranilate phosphoribosyltransferase of Rhodospirillum rubrum (strain ATCC 11170 / ATH 1.1.1 / DSM 467 / LMG 4362 / NCIMB 8255 / S1).